Here is a 493-residue protein sequence, read N- to C-terminus: Guanosine-5'-triphosphate,3'-diphosphate pyrophosphatase (493 aa).

Belongs to the GppA/Ppx family. GppA subfamily.

The enzyme catalyses guanosine 3'-diphosphate 5'-triphosphate + H2O = guanosine 3',5'-bis(diphosphate) + phosphate + H(+). It functions in the pathway purine metabolism; ppGpp biosynthesis; ppGpp from GTP: step 2/2. Its function is as follows. Catalyzes the conversion of pppGpp to ppGpp. Guanosine pentaphosphate (pppGpp) is a cytoplasmic signaling molecule which together with ppGpp controls the 'stringent response', an adaptive process that allows bacteria to respond to amino acid starvation, resulting in the coordinated regulation of numerous cellular activities. The protein is Guanosine-5'-triphosphate,3'-diphosphate pyrophosphatase of Salmonella agona (strain SL483).